The following is a 255-amino-acid chain: Taurine import ATP-binding protein TauB (255 aa).

The 228-residue stretch at 2 to 229 (LQISHLYADY…RFVAGESSRS (228 aa)) folds into the ABC transporter domain. An ATP-binding site is contributed by 34–41 (GPSGCGKT).

This sequence belongs to the ABC transporter superfamily. Taurine importer (TC 3.A.1.17.1) family. The complex is composed of two ATP-binding proteins (TauB), two transmembrane proteins (TauC) and a solute-binding protein (TauA).

It localises to the cell inner membrane. It catalyses the reaction taurine(out) + ATP + H2O = taurine(in) + ADP + phosphate + H(+). Part of the ABC transporter complex TauABC involved in taurine import. Responsible for energy coupling to the transport system. The sequence is that of Taurine import ATP-binding protein TauB from Escherichia coli O157:H7.